Here is a 274-residue protein sequence, read N- to C-terminus: Dermonecrotic toxin SdSicTox-betaIIB1bvii (274 aa).

Residue His-5 is part of the active site. Mg(2+) contacts are provided by Glu-25 and Asp-27. His-41 functions as the Nucleophile in the catalytic mechanism. 2 cysteine pairs are disulfide-bonded: Cys-45/Cys-51 and Cys-47/Cys-190. Asp-85 contacts Mg(2+).

It belongs to the arthropod phospholipase D family. Class II subfamily. Mg(2+) serves as cofactor. As to expression, expressed by the venom gland.

Its subcellular location is the secreted. It carries out the reaction an N-(acyl)-sphingosylphosphocholine = an N-(acyl)-sphingosyl-1,3-cyclic phosphate + choline. It catalyses the reaction an N-(acyl)-sphingosylphosphoethanolamine = an N-(acyl)-sphingosyl-1,3-cyclic phosphate + ethanolamine. The enzyme catalyses a 1-acyl-sn-glycero-3-phosphocholine = a 1-acyl-sn-glycero-2,3-cyclic phosphate + choline. The catalysed reaction is a 1-acyl-sn-glycero-3-phosphoethanolamine = a 1-acyl-sn-glycero-2,3-cyclic phosphate + ethanolamine. Its function is as follows. Dermonecrotic toxins cleave the phosphodiester linkage between the phosphate and headgroup of certain phospholipids (sphingolipid and lysolipid substrates), forming an alcohol (often choline) and a cyclic phosphate. This toxin acts on sphingomyelin (SM). It may also act on ceramide phosphoethanolamine (CPE), lysophosphatidylcholine (LPC) and lysophosphatidylethanolamine (LPE), but not on lysophosphatidylserine (LPS), and lysophosphatidylglycerol (LPG). It acts by transphosphatidylation, releasing exclusively cyclic phosphate products as second products. Induces dermonecrosis, hemolysis, increased vascular permeability, edema, inflammatory response, and platelet aggregation. In Sicarius cf. damarensis (strain GJB-2008) (Six-eyed sand spider), this protein is Dermonecrotic toxin SdSicTox-betaIIB1bvii.